We begin with the raw amino-acid sequence, 475 residues long: tRNA-2-methylthio-N(6)-dimethylallyladenosine synthase (475 aa).

The 118-residue stretch at 2 to 119 (AKLHITTWGC…LPEMINKIRG (118 aa)) folds into the MTTase N-terminal domain. [4Fe-4S] cluster contacts are provided by cysteine 11, cysteine 48, cysteine 82, cysteine 156, cysteine 160, and cysteine 163. Positions 142–374 (RAEGPTAFVS…QQRINHQAMQ (233 aa)) constitute a Radical SAM core domain. One can recognise a TRAM domain in the interval 377–440 (RAMLGTEQRV…TNSLRGEVVR (64 aa)).

Belongs to the methylthiotransferase family. MiaB subfamily. As to quaternary structure, monomer. Requires [4Fe-4S] cluster as cofactor.

Its subcellular location is the cytoplasm. It catalyses the reaction N(6)-dimethylallyladenosine(37) in tRNA + (sulfur carrier)-SH + AH2 + 2 S-adenosyl-L-methionine = 2-methylsulfanyl-N(6)-dimethylallyladenosine(37) in tRNA + (sulfur carrier)-H + 5'-deoxyadenosine + L-methionine + A + S-adenosyl-L-homocysteine + 2 H(+). Its function is as follows. Catalyzes the methylthiolation of N6-(dimethylallyl)adenosine (i(6)A), leading to the formation of 2-methylthio-N6-(dimethylallyl)adenosine (ms(2)i(6)A) at position 37 in tRNAs that read codons beginning with uridine. The polypeptide is tRNA-2-methylthio-N(6)-dimethylallyladenosine synthase (Actinobacillus pleuropneumoniae serotype 3 (strain JL03)).